Consider the following 140-residue polypeptide: Methylglyoxal synthase (140 aa).

Residues 1-140 (MKIALIAHDK…RGRKGEINGL (140 aa)) enclose the MGS-like domain. Residues His8, Lys12, 34-37 (TGTT), and 54-55 (SG) each bind substrate. The active-site Proton donor/acceptor is Asp60. His87 serves as a coordination point for substrate.

It belongs to the methylglyoxal synthase family.

The enzyme catalyses dihydroxyacetone phosphate = methylglyoxal + phosphate. Its function is as follows. Catalyzes the formation of methylglyoxal from dihydroxyacetone phosphate. In Geobacillus sp. (strain WCH70), this protein is Methylglyoxal synthase.